Here is a 378-residue protein sequence, read N- to C-terminus: Acetylornithine deacetylase (378 aa).

His76 contacts Zn(2+). The active site involves Asp78. Asp108 contacts Zn(2+). Glu140 is a catalytic residue. Residues Glu141, Glu165, and His351 each contribute to the Zn(2+) site.

This sequence belongs to the peptidase M20A family. ArgE subfamily. As to quaternary structure, homodimer. Requires Zn(2+) as cofactor. Co(2+) is required as a cofactor. Glutathione serves as cofactor.

It is found in the cytoplasm. The catalysed reaction is N(2)-acetyl-L-ornithine + H2O = L-ornithine + acetate. The protein operates within amino-acid biosynthesis; L-arginine biosynthesis; L-ornithine from N(2)-acetyl-L-ornithine (linear): step 1/1. Its function is as follows. Catalyzes the hydrolysis of the amide bond of N(2)-acetylated L-amino acids. Cleaves the acetyl group from N-acetyl-L-ornithine to form L-ornithine, an intermediate in L-arginine biosynthesis pathway, and a branchpoint in the synthesis of polyamines. In Aliivibrio fischeri (strain ATCC 700601 / ES114) (Vibrio fischeri), this protein is Acetylornithine deacetylase.